We begin with the raw amino-acid sequence, 100 residues long: UPF0045 protein MJ1052 (100 aa).

The protein belongs to the UPF0045 family.

The protein is UPF0045 protein MJ1052 of Methanocaldococcus jannaschii (strain ATCC 43067 / DSM 2661 / JAL-1 / JCM 10045 / NBRC 100440) (Methanococcus jannaschii).